The primary structure comprises 218 residues: MSDIEIKGILGKKLGMTQIFDDENRVVPVTVVEAGPCVVTQVRTKDIDGYEAVQIAFGEIDPRKVNKPESGHFKKAGVTPRRHVAEIRVADASGYEVGQDVTVEIFNEVDFVDVTGTSKGHGFAGGMKRHGFAGQGAAHGNQAAHRRVGGIGGAATPGRVFKGKRMAGRMGNNRVTMQNLKVAKVDTDSNLLLIKGAVPGINGGIVVVKTAVKGGAKA.

The protein belongs to the universal ribosomal protein uL3 family. Part of the 50S ribosomal subunit. Forms a cluster with proteins L14 and L19.

In terms of biological role, one of the primary rRNA binding proteins, it binds directly near the 3'-end of the 23S rRNA, where it nucleates assembly of the 50S subunit. This chain is Large ribosomal subunit protein uL3, found in Corynebacterium urealyticum (strain ATCC 43042 / DSM 7109).